The chain runs to 709 residues: Myotubularin-related protein 11 (709 aa).

A disordered region spans residues 1-39 (MWWGGRGQSFNIAPQKEEPEMGSVQENRMPEPRSRQPSS). Positions 196–639 (METAEDWETE…PQIRLWRRCY (444 aa)) constitute a Myotubularin phosphatase domain.

This sequence belongs to the protein-tyrosine phosphatase family. Non-receptor class myotubularin subfamily. Expressed in bone marrow, spleen and thymus.

The chain is Myotubularin-related protein 11 (MTMR11) from Homo sapiens (Human).